Reading from the N-terminus, the 82-residue chain is Cytochrome b559 subunit alpha (82 aa).

Residues valine 22 to tyrosine 36 traverse the membrane as a helical segment. Histidine 24 lines the heme pocket.

This sequence belongs to the PsbE/PsbF family. In terms of assembly, heterodimer of an alpha subunit and a beta subunit. PSII is composed of 1 copy each of membrane proteins PsbA, PsbB, PsbC, PsbD, PsbE, PsbF, PsbH, PsbI, PsbJ, PsbK, PsbL, PsbM, PsbT, PsbX, PsbY, Psb30/Ycf12, peripheral proteins PsbO, CyanoQ (PsbQ), PsbU, PsbV and a large number of cofactors. It forms dimeric complexes. The cofactor is heme b.

The protein resides in the cellular thylakoid membrane. This b-type cytochrome is tightly associated with the reaction center of photosystem II (PSII). PSII is a light-driven water:plastoquinone oxidoreductase that uses light energy to abstract electrons from H(2)O, generating O(2) and a proton gradient subsequently used for ATP formation. It consists of a core antenna complex that captures photons, and an electron transfer chain that converts photonic excitation into a charge separation. In Prochlorococcus marinus (strain MIT 9303), this protein is Cytochrome b559 subunit alpha.